A 567-amino-acid chain; its full sequence is TGF-beta receptor type-2 (567 aa).

Residues 1-22 (MGRGLLRGLWPLHIVLWTRIAS) form the signal peptide. At 23-166 (TIPPHVQKSV…NPDLLLVIFQ (144 aa)) the chain is on the extracellular side. 6 cysteine pairs are disulfide-bonded: Cys51/Cys84, Cys54/Cys71, Cys61/Cys67, Cys77/Cys101, Cys121/Cys136, and Cys138/Cys143. 2 N-linked (GlcNAc...) asparagine glycosylation sites follow: Asn70 and Asn94. A glycan (N-linked (GlcNAc...) asparagine) is linked at Asn154. Residues 167–187 (VTGISLLPPLGVAISVIIIFY) traverse the membrane as a helical segment. Topologically, residues 188 to 567 (CYRVNRQQKL…PEDGSLNTTK (380 aa)) are cytoplasmic. The Protein kinase domain occupies 244-544 (IELDTLVGKG…AERFSELEHL (301 aa)). ATP is bound by residues 250 to 258 (VGKGRFAEV) and Lys277. Asp379 (proton acceptor) is an active-site residue. Ser409, Ser548, and Ser553 each carry phosphoserine. Residues 439–567 (VESFKQTDVY…PEDGSLNTTK (129 aa)) are sufficient for interaction with CLU.

It belongs to the protein kinase superfamily. TKL Ser/Thr protein kinase family. TGFB receptor subfamily. As to quaternary structure, homodimer. Heterohexamer; TGFB1, TGFB2 and TGFB3 homodimeric ligands assemble a functional receptor composed of two TGFBR1 and TGFBR2 heterodimers to form a ligand-receptor heterohexamer. The respective affinity of TGFRB1 and TGFRB2 for the ligands may modulate the kinetics of assembly of the receptor and may explain the different biological activities of TGFB1, TGFB2 and TGFB3. Component of a complex composed of TSC22D1 (via N-terminus), TGFBR1 and TGFBR2; the interaction between TSC22D1 and TGFBR1 is inhibited by SMAD7 and promoted by TGFB1. Interacts with DAXX. Interacts with DYNLT4. Interacts with ZFYVE9; ZFYVE9 recruits SMAD2 and SMAD3 to the TGF-beta receptor. Interacts with and is activated by SCUBE3; this interaction does not affect TGFB1-binding to TGFBR2. Interacts with VPS39; this interaction is independent of the receptor kinase activity and of the presence of TGF-beta. Interacts with CLU. In terms of assembly, homodimer; disulfide-linked. Mg(2+) is required as a cofactor. Mn(2+) serves as cofactor. Post-translationally, phosphorylated on a Ser/Thr residue in the cytoplasmic domain.

It is found in the cell membrane. The protein resides in the membrane raft. The protein localises to the secreted. The catalysed reaction is L-threonyl-[receptor-protein] + ATP = O-phospho-L-threonyl-[receptor-protein] + ADP + H(+). It carries out the reaction L-seryl-[receptor-protein] + ATP = O-phospho-L-seryl-[receptor-protein] + ADP + H(+). In terms of biological role, transmembrane serine/threonine kinase forming with the TGF-beta type I serine/threonine kinase receptor, TGFBR1, the non-promiscuous receptor for the TGF-beta cytokines TGFB1, TGFB2 and TGFB3. Transduces the TGFB1, TGFB2 and TGFB3 signal from the cell surface to the cytoplasm and thus regulates a plethora of physiological and pathological processes including cell cycle arrest in epithelial and hematopoietic cells, control of mesenchymal cell proliferation and differentiation, wound healing, extracellular matrix production, immunosuppression and carcinogenesis. The formation of the receptor complex composed of 2 TGFBR1 and 2 TGFBR2 molecules symmetrically bound to the cytokine dimer results in the phosphorylation and activation of TGFBR1 by the constitutively active TGFBR2. Activated TGFBR1 phosphorylates SMAD2 which dissociates from the receptor and interacts with SMAD4. The SMAD2-SMAD4 complex is subsequently translocated to the nucleus where it modulates the transcription of the TGF-beta-regulated genes. This constitutes the canonical SMAD-dependent TGF-beta signaling cascade. Also involved in non-canonical, SMAD-independent TGF-beta signaling pathways. Functionally, has transforming growth factor beta-activated receptor activity. Its function is as follows. Binds TGFB1, TGFB2 and TGFB3 in the picomolar affinity range without the participation of additional receptors. Blocks activation of SMAD2 and SMAD3 by TGFB1. This is TGF-beta receptor type-2 (TGFBR2) from Homo sapiens (Human).